We begin with the raw amino-acid sequence, 257 residues long: MGSLHDYVLIITGSASGIGLATATIALDEGARVLGVDISSPPRSLIDHSNFKFVEGNLSLEPTPRRVVEACVKAFGGRIDGLLNIAGVMDLNQSVDSLSDTMWESCIAINLTAPVKLMREVIPIMRQQKSGSIVNVASKAALSGAVSGVAYTASKHGLVGATKNVAWRFKQENIRCNAVCPGAVDGTSIHRGLETSQFDSEALGTMSLIHEAHMRDRERGIHIQPEDIARSLLFLVSSRSNGINGAIIPIDNAWSTI.

A helical membrane pass occupies residues 7–26; sequence YVLIITGSASGIGLATATIA. Ile11 serves as a coordination point for NADP(+). N-linked (GlcNAc...) asparagine glycans are attached at residues Asn57, Asn92, and Asn110. 4 residues coordinate NADP(+): Arg119, Tyr151, Lys155, and Val184. Residue Tyr151 is the Proton donor of the active site. The active-site Lowers pKa of active site Tyr is the Lys155.

This sequence belongs to the short-chain dehydrogenases/reductases (SDR) family.

The protein localises to the membrane. The catalysed reaction is asnovolin H + A = chermesin D + AH2. It functions in the pathway secondary metabolite biosynthesis; terpenoid biosynthesis. Its function is as follows. Short chain dehydrogenase; part of the gene cluster that mediates the biosynthesis of novofumigatonin, a heavily oxygenated meroterpenoid containing a unique orthoester moiety. The first step of the pathway is the synthesis of 3,5-dimethylorsellinic acid (DMOA) by the polyketide synthase nvfA via condensation of one acetyl-CoA starter unit with 3 malonyl-CoA units and 2 methylations. DMOA is then converted to farnesyl-DMOA by the farnesyltransferase nvfB. Epoxydation by FAD-dependent monooxygenase nvfK, followed by a protonation-initiated cyclization catalyzed by the terpene cyclase nvfL leads to the production of asnavolin H. The short chain dehydrogenase nvfC then as a 3-OH dehydrogenase of asnovolin H to yield chemesin D. There are two branches to synthesize asnovolin A from chemesin D. In one branch, chemesin D undergoes Baeyer-Villiger oxidation by nvfH, methylation by nvfJ, and enoyl reduction by the nvfM D enoylreductase that reduces the double bond between C-5'and C-6', to form respectively asnovolin I, asnovolin K, and asnovolin A. In the other branch, the methylation precedes the Baeyer-Villiger oxidation and the enoyl reduction to yield asnovolin A via the asnovolin J intermediate. Asnovolin A is further converted to fumigatonoid A by the Fe(II)/2-oxoglutarate-dependent dioxygenase nvfI that catalyzes an endoperoxidation reaction. The alpha/beta hydrolase nvfD then acts as an epimerase that converts fumigatonoid A to its C-5' epimer, which then undergoes spontaneous or nvfD-catalyzed lactonization. The following step utilizes the ketoreductase nvfG to produce fumigatonoid B. The dioxygenase nvfE further converts fumigatonoid B into fumigatonoid C. Finally the Fe(II)/2-oxoglutarate-dependent dioxygenase nvfF catalyzes two rounds of oxidation to transform fumigatonoid C into the end product, novofumigatonin A. The polypeptide is Asnovolin H dehydrogenase nvfC (Aspergillus novofumigatus (strain IBT 16806)).